We begin with the raw amino-acid sequence, 468 residues long: 3-isopropylmalate dehydratase large subunit (468 aa).

Cys349, Cys409, and Cys412 together coordinate [4Fe-4S] cluster.

This sequence belongs to the aconitase/IPM isomerase family. LeuC type 1 subfamily. As to quaternary structure, heterodimer of LeuC and LeuD. It depends on [4Fe-4S] cluster as a cofactor.

The enzyme catalyses (2R,3S)-3-isopropylmalate = (2S)-2-isopropylmalate. The protein operates within amino-acid biosynthesis; L-leucine biosynthesis; L-leucine from 3-methyl-2-oxobutanoate: step 2/4. Its function is as follows. Catalyzes the isomerization between 2-isopropylmalate and 3-isopropylmalate, via the formation of 2-isopropylmaleate. This chain is 3-isopropylmalate dehydratase large subunit, found in Shewanella baltica (strain OS185).